Reading from the N-terminus, the 373-residue chain is Glutamate 5-kinase (373 aa).

Residue lysine 16 participates in ATP binding. Substrate contacts are provided by serine 56, aspartate 143, and asparagine 155. 175 to 176 (TD) contacts ATP. The region spanning 281–359 (RGVVTLDDGA…TKIETLLGYK (79 aa)) is the PUA domain.

It belongs to the glutamate 5-kinase family.

It is found in the cytoplasm. It carries out the reaction L-glutamate + ATP = L-glutamyl 5-phosphate + ADP. It participates in amino-acid biosynthesis; L-proline biosynthesis; L-glutamate 5-semialdehyde from L-glutamate: step 1/2. In terms of biological role, catalyzes the transfer of a phosphate group to glutamate to form L-glutamate 5-phosphate. The sequence is that of Glutamate 5-kinase from Teredinibacter turnerae (strain ATCC 39867 / T7901).